The primary structure comprises 148 residues: Deoxyuridine 5'-triphosphate nucleotidohydrolase (148 aa).

Substrate is bound by residues 67 to 69 (RSG), Asn80, 84 to 86 (LID), and Met94.

It belongs to the dUTPase family. Mg(2+) is required as a cofactor.

The catalysed reaction is dUTP + H2O = dUMP + diphosphate + H(+). The protein operates within pyrimidine metabolism; dUMP biosynthesis; dUMP from dCTP (dUTP route): step 2/2. This enzyme is involved in nucleotide metabolism: it produces dUMP, the immediate precursor of thymidine nucleotides and it decreases the intracellular concentration of dUTP so that uracil cannot be incorporated into DNA. The chain is Deoxyuridine 5'-triphosphate nucleotidohydrolase from Burkholderia cenocepacia (strain HI2424).